A 348-amino-acid chain; its full sequence is NADH-ubiquinone oxidoreductase chain 2 (348 aa).

Helical transmembrane passes span 13-33 (VGLG…WMGL), 60-80 (FLTQ…NAWM), 93-113 (IAST…PMHF), 149-169 (IDPL…GWGG), 178-197 (ILAY…IQYA), 202-219 (LIAL…FLTL), 246-266 (LVLL…KWLI), 274-294 (DLPI…YFYL), and 326-346 (LALF…ILML).

It belongs to the complex I subunit 2 family.

It localises to the mitochondrion inner membrane. It carries out the reaction a ubiquinone + NADH + 5 H(+)(in) = a ubiquinol + NAD(+) + 4 H(+)(out). In terms of biological role, core subunit of the mitochondrial membrane respiratory chain NADH dehydrogenase (Complex I) that is believed to belong to the minimal assembly required for catalysis. Complex I functions in the transfer of electrons from NADH to the respiratory chain. The immediate electron acceptor for the enzyme is believed to be ubiquinone. The sequence is that of NADH-ubiquinone oxidoreductase chain 2 (MT-ND2) from Cyprinus carpio (Common carp).